A 193-amino-acid chain; its full sequence is Probable nicotinate-nucleotide adenylyltransferase (193 aa).

The protein belongs to the NadD family.

It catalyses the reaction nicotinate beta-D-ribonucleotide + ATP + H(+) = deamido-NAD(+) + diphosphate. It participates in cofactor biosynthesis; NAD(+) biosynthesis; deamido-NAD(+) from nicotinate D-ribonucleotide: step 1/1. Its function is as follows. Catalyzes the reversible adenylation of nicotinate mononucleotide (NaMN) to nicotinic acid adenine dinucleotide (NaAD). The chain is Probable nicotinate-nucleotide adenylyltransferase from Flavobacterium johnsoniae (strain ATCC 17061 / DSM 2064 / JCM 8514 / BCRC 14874 / CCUG 350202 / NBRC 14942 / NCIMB 11054 / UW101) (Cytophaga johnsonae).